Reading from the N-terminus, the 84-residue chain is Sulfur carrier protein TusA (84 aa).

The active-site Cysteine persulfide intermediate is Cys21.

It belongs to the sulfur carrier protein TusA family.

It localises to the cytoplasm. Sulfur carrier protein which probably makes part of a sulfur-relay system. The chain is Sulfur carrier protein TusA from Pseudomonas syringae pv. syringae (strain B728a).